The chain runs to 354 residues: Isopentenyl-diphosphate delta-isomerase (354 aa).

11–12 (KK) lines the substrate pocket. FMN-binding positions include Ser67, 68-70 (SMT), Ser98, and Asn126. 98–100 (SFK) contacts substrate. Gln160 contributes to the substrate binding site. Glu161 is a binding site for Mg(2+). Residues Lys192, Thr222, and 289–290 (AA) each bind FMN.

Belongs to the IPP isomerase type 2 family. As to quaternary structure, homooctamer. Dimer of tetramers. It depends on FMN as a cofactor. NADPH serves as cofactor. Mg(2+) is required as a cofactor.

Its subcellular location is the cytoplasm. The enzyme catalyses isopentenyl diphosphate = dimethylallyl diphosphate. Its function is as follows. Involved in the biosynthesis of isoprenoids. Catalyzes the 1,3-allylic rearrangement of the homoallylic substrate isopentenyl (IPP) to its allylic isomer, dimethylallyl diphosphate (DMAPP). This is Isopentenyl-diphosphate delta-isomerase from Borrelia garinii subsp. bavariensis (strain ATCC BAA-2496 / DSM 23469 / PBi) (Borreliella bavariensis).